The primary structure comprises 699 residues: Polyribonucleotide nucleotidyltransferase (699 aa).

Mg(2+) contacts are provided by aspartate 485 and aspartate 491. One can recognise a KH domain in the interval 552–611; that stretch reads PRITTIKINPEKIRDVIGKGGAVIRALTEETGTTIELEDDGTVKIASSNGEATKEAIRRI. The region spanning 621–689 is the S1 motif domain; the sequence is GRIYNGKVIR…RQGRVRLSIK (69 aa).

It belongs to the polyribonucleotide nucleotidyltransferase family. As to quaternary structure, component of the RNA degradosome, which is a multiprotein complex involved in RNA processing and mRNA degradation. Requires Mg(2+) as cofactor.

Its subcellular location is the cytoplasm. The enzyme catalyses RNA(n+1) + phosphate = RNA(n) + a ribonucleoside 5'-diphosphate. Involved in mRNA degradation. Catalyzes the phosphorolysis of single-stranded polyribonucleotides processively in the 3'- to 5'-direction. This is Polyribonucleotide nucleotidyltransferase from Shewanella oneidensis (strain ATCC 700550 / JCM 31522 / CIP 106686 / LMG 19005 / NCIMB 14063 / MR-1).